The primary structure comprises 134 residues: Small ribosomal subunit protein uS9c (134 aa).

A compositionally biased stretch (basic and acidic residues) spans 105–114 (DHHLTRDARA). The tract at residues 105-134 (DHHLTRDARAKERKKYGLHKARKAPQYSKR) is disordered. Positions 115-134 (KERKKYGLHKARKAPQYSKR) are enriched in basic residues.

The protein belongs to the universal ribosomal protein uS9 family.

It localises to the plastid. It is found in the cyanelle. In Cyanophora paradoxa, this protein is Small ribosomal subunit protein uS9c (rps9).